A 248-amino-acid polypeptide reads, in one-letter code: Probable transcriptional regulatory protein SO_2432 (248 aa).

Belongs to the TACO1 family.

It is found in the cytoplasm. The chain is Probable transcriptional regulatory protein SO_2432 from Shewanella oneidensis (strain ATCC 700550 / JCM 31522 / CIP 106686 / LMG 19005 / NCIMB 14063 / MR-1).